A 7081-amino-acid polypeptide reads, in one-letter code: Leucine-rich repeat transmembrane protein CCDC168 (7081 aa).

Residues 37–57 (WVAIFFIILLGIIFEIILMKA) traverse the membrane as a helical segment. LRR repeat units lie at residues 233–256 (PCPL…VRNQ) and 420–445 (NAEF…SVKA). The disordered stretch occupies residues 717–745 (EDLQSSENSHLQLSNGEELPTSTPKTQRC). Residues 718-742 (DLQSSENSHLQLSNGEELPTSTPKT) are compositionally biased toward polar residues. One copy of the LRR 3 repeat lies at 865 to 890 (ADTLRIIRLSHSASKQEKLPDEKETQ). A disordered region spans residues 943-1009 (QISSGSSKAP…DPKNPLTMPE (67 aa)). Residues 958–970 (VQPQTLSTQTILE) are compositionally biased toward polar residues. A compositionally biased stretch (basic and acidic residues) spans 981-999 (QVEKVKQSTDRPTDRESAG). The LRR 4 repeat unit spans residues 1050–1075 (LPAVALGSFNNHLLTLPYFKRQEIKK). Polar residues-rich tracts occupy residues 1274 to 1286 (KCTA…SPIS) and 1295 to 1304 (LNQTRESYIP). The tract at residues 1274 to 1304 (KCTADSETPSPISGKSLIGDPLNQTRESYIP) is disordered. The LRR 5 repeat unit spans residues 1501–1527 (NCLTLELHINGQRLQHQTGFEQTTLET). Composition is skewed to basic and acidic residues over residues 1773 to 1784 (ETEKDTLREKRL) and 1793 to 1804 (TSPHEDSITSRD). Disordered regions lie at residues 1773–1804 (ETEK…TSRD), 1954–1973 (KSPH…ESGS), 2008–2031 (STHQ…EGRS), and 2083–2103 (TGKS…NPRR). Residues 1964 to 1973 (ANLTDMESGS) show a composition bias toward polar residues. An LRR 6 repeat occupies 2373 to 2397 (KNQINTIQLSERKIILNPKCLTMKE). The disordered stretch occupies residues 2637–2680 (GRHSPASEEMKRQNGRLKMADRSSPQGRPLQAKQSAVSQSPDTA). A compositionally biased stretch (polar residues) spans 2668–2678 (AKQSAVSQSPD). 5 LRR repeats span residues 2727–2749 (SKIH…KTRA), 2832–2855 (IQQQ…VYDS), 2862–2889 (IKKL…KLEK), 3433–3458 (LSSR…RLEW), and 3630–3653 (ILSL…NVKS). The interval 3730–3756 (SLSHSNSNSRTKAGKDKSGTLKGCLPP) is disordered. One copy of the LRR 12 repeat lies at 3875 to 3898 (MRGITRFCLSSSTQQELSDTMEKC). 8 disordered regions span residues 4119-4260 (ELSH…DGDK), 4293-4428 (QGII…KQET), 4729-4756 (QESL…LLPQ), 4794-4817 (SPLS…QDRT), 4831-4859 (MPSL…RLAN), 4928-4955 (GVQE…YLNC), 4966-4985 (LGKT…SDSG), and 5191-5212 (QKVK…SPLH). 6 stretches are compositionally biased toward basic and acidic residues: residues 4121 to 4133 (SHQK…EKAD), 4147 to 4176 (KAKD…DKGL), 4192 to 4245 (EPGK…EQQK), 4329 to 4361 (QKAK…DLKG), 4375 to 4401 (EPGK…NRDG), and 4415 to 4426 (EQEKRDGHKSKQ). Over residues 4731–4743 (SLPSRQTAPTKPT) the composition is skewed to polar residues. Composition is skewed to basic and acidic residues over residues 4746–4756 (LVKKEKQLLPQ) and 4798–4817 (KRKE…QDRT). The segment covering 5203 to 5212 (KSPSRSSPLH) has biased composition (polar residues). The stretch at 5311-5336 (LSQLELDKETHLGNEMLRLKRPILRR) is one LRR 13 repeat. Residues 5467 to 5496 (LPDTEKTADAEARSGDVRKGKPHRSQKENR) form a disordered region. Residues 5469 to 5496 (DTEKTADAEARSGDVRKGKPHRSQKENR) show a composition bias toward basic and acidic residues. The LRR 14 repeat unit spans residues 5522 to 5545 (LNAKELVLNINKLEKKVHKDKDEA). Disordered regions lie at residues 5564-5583 (LDSG…SSCP) and 5763-5792 (QQET…SNDR). Positions 5779-5792 (KFDKPKEDGQSNDR) are enriched in basic and acidic residues. LRR repeat units follow at residues 5901-5924 (KQAL…LFPP), 6259-6282 (PDLR…ECPS), 6419-6442 (HLES…SLQM), 6552-6575 (HFSV…SYAM), and 6613-6637 (QIDL…TFPK). 2 disordered regions span residues 6859-6878 (CKSH…SPDW) and 6916-6950 (APLT…RSDL). The segment covering 6860 to 6871 (KSHKSRKYRSSS) has biased composition (basic residues). Positions 6937-6950 (HPESQERKKARSDL) are enriched in basic and acidic residues. An LRR 20 repeat occupies 7012–7036 (NRPFFFACVPADSLEVIPKTIRWTI).

The protein localises to the membrane. The protein is Leucine-rich repeat transmembrane protein CCDC168 of Homo sapiens (Human).